Consider the following 382-residue polypeptide: Lactaldehyde reductase (382 aa).

NAD(+)-binding positions include Asp38, Asn70, 97-98 (GS), 139-143 (TTAGT), Asn150, Lys161, and 180-184 (MMDGM). The Fe cation site is built by Asp195, His199, His262, and His276.

The protein belongs to the iron-containing alcohol dehydrogenase family. As to quaternary structure, homodimer. Requires Fe cation as cofactor.

The catalysed reaction is (R)-propane-1,2-diol + NAD(+) = (R)-lactaldehyde + NADH + H(+). The enzyme catalyses (S)-propane-1,2-diol + NAD(+) = (S)-lactaldehyde + NADH + H(+). The protein operates within carbohydrate degradation; L-fucose degradation. In Escherichia coli O157:H7, this protein is Lactaldehyde reductase (fucO).